A 214-amino-acid chain; its full sequence is Pyridoxine/pyridoxamine 5'-phosphate oxidase (214 aa).

Substrate-binding positions include 9–12 and K67; that span reads RKNY. FMN-binding positions include 62 to 67, 77 to 78, K84, and Q106; these read RMVLLK and YT. Substrate-binding residues include Y124, R128, and S132. Residues 141–142 and W186 each bind FMN; that span reads QS. Position 192 to 194 (192 to 194) interacts with substrate; it reads RLH. FMN is bound at residue R196.

Belongs to the pyridoxamine 5'-phosphate oxidase family. As to quaternary structure, homodimer. It depends on FMN as a cofactor.

The enzyme catalyses pyridoxamine 5'-phosphate + O2 + H2O = pyridoxal 5'-phosphate + H2O2 + NH4(+). It catalyses the reaction pyridoxine 5'-phosphate + O2 = pyridoxal 5'-phosphate + H2O2. Its pathway is cofactor metabolism; pyridoxal 5'-phosphate salvage; pyridoxal 5'-phosphate from pyridoxamine 5'-phosphate: step 1/1. The protein operates within cofactor metabolism; pyridoxal 5'-phosphate salvage; pyridoxal 5'-phosphate from pyridoxine 5'-phosphate: step 1/1. Functionally, catalyzes the oxidation of either pyridoxine 5'-phosphate (PNP) or pyridoxamine 5'-phosphate (PMP) into pyridoxal 5'-phosphate (PLP). This Gloeothece citriformis (strain PCC 7424) (Cyanothece sp. (strain PCC 7424)) protein is Pyridoxine/pyridoxamine 5'-phosphate oxidase.